Consider the following 373-residue polypeptide: DNA replication and repair protein RecF (373 aa).

Residue 30–37 participates in ATP binding; sequence GENAQGKT.

This sequence belongs to the RecF family.

Its subcellular location is the cytoplasm. The RecF protein is involved in DNA metabolism; it is required for DNA replication and normal SOS inducibility. RecF binds preferentially to single-stranded, linear DNA. It also seems to bind ATP. This chain is DNA replication and repair protein RecF, found in Limosilactobacillus fermentum (strain NBRC 3956 / LMG 18251) (Lactobacillus fermentum).